The chain runs to 132 residues: Small ribosomal subunit protein uS8 (132 aa).

The protein belongs to the universal ribosomal protein uS8 family. In terms of assembly, part of the 30S ribosomal subunit. Contacts proteins S5 and S12.

In terms of biological role, one of the primary rRNA binding proteins, it binds directly to 16S rRNA central domain where it helps coordinate assembly of the platform of the 30S subunit. This chain is Small ribosomal subunit protein uS8, found in Bartonella quintana (strain Toulouse) (Rochalimaea quintana).